Consider the following 237-residue polypeptide: Oligoribonuclease, mitochondrial (237 aa).

Residues 1 to 25 (MLGGSLGSRLLRGVGGTRGQFRARG) constitute a mitochondrion transit peptide. In terms of domain architecture, Exonuclease spans 43–207 (MVWVDLEMTG…DDISESIKEL (165 aa)). Residues Asp47 and Glu49 each contribute to the Mg(2+) site. Residue Ser92 is modified to Phosphoserine. Position 122 is a phosphotyrosine (Tyr122). Asp147 lines the Mg(2+) pocket. At Lys173 the chain carries N6-acetyllysine. His194 is a catalytic residue. Asp199 serves as a coordination point for Mg(2+).

It belongs to the oligoribonuclease family. Homodimer. Homotetramer. Mn(2+) serves as cofactor. It depends on Mg(2+) as a cofactor.

The protein resides in the mitochondrion intermembrane space. Its subcellular location is the mitochondrion matrix. It localises to the mitochondrion. The protein localises to the cytoplasm. It is found in the nucleus. In terms of biological role, 3'-to-5'exoribonuclease that preferentially degrades DNA and RNA oligonucleotides composed of only two nucleotides. Binds and degrades longer oligonucleotides with a lower affinity. Plays dual roles in mitochondria, scavenging nanoRNAs (small RNA oligonucleotides of &lt;5 nucleotides) that are produced by the degradosome and clearing short RNAs that are generated by RNA processing. Essential for correct initiation of mitochondrial transcription, degrading mitochondrial RNA dinucleotides to prevent RNA-primed transcription at non-canonical sites in the mitochondrial genome. Essential for embryonic development. The chain is Oligoribonuclease, mitochondrial (REXO2) from Bos taurus (Bovine).